Reading from the N-terminus, the 413-residue chain is Putative competence-damage inducible protein (413 aa).

This sequence belongs to the CinA family.

This Lacticaseibacillus paracasei (strain ATCC 334 / BCRC 17002 / CCUG 31169 / CIP 107868 / KCTC 3260 / NRRL B-441) (Lactobacillus paracasei) protein is Putative competence-damage inducible protein.